Reading from the N-terminus, the 494-residue chain is Sulfate adenylyltransferase subunit 1 (494 aa).

The tr-type G domain maps to 28–242 (TRPLRLITCG…TLELATVRST (215 aa)). Residues 37-44 (GSVDDGKS) are G1. 37–44 (GSVDDGKS) lines the GTP pocket. The tract at residues 94–98 (GITID) is G2. Residues 115–118 (DTPG) are G3. GTP is bound by residues 115–119 (DTPGH) and 170–173 (NKID). The G4 stretch occupies residues 170 to 173 (NKID). A G5 region spans residues 207-209 (SAL).

Belongs to the TRAFAC class translation factor GTPase superfamily. Classic translation factor GTPase family. CysN/NodQ subfamily. As to quaternary structure, heterodimer composed of CysD, the smaller subunit, and CysN.

It carries out the reaction sulfate + ATP + H(+) = adenosine 5'-phosphosulfate + diphosphate. Its pathway is sulfur metabolism; hydrogen sulfide biosynthesis; sulfite from sulfate: step 1/3. Its function is as follows. With CysD forms the ATP sulfurylase (ATPS) that catalyzes the adenylation of sulfate producing adenosine 5'-phosphosulfate (APS) and diphosphate, the first enzymatic step in sulfur assimilation pathway. APS synthesis involves the formation of a high-energy phosphoric-sulfuric acid anhydride bond driven by GTP hydrolysis by CysN coupled to ATP hydrolysis by CysD. This Agrobacterium fabrum (strain C58 / ATCC 33970) (Agrobacterium tumefaciens (strain C58)) protein is Sulfate adenylyltransferase subunit 1.